Consider the following 330-residue polypeptide: Carbonic anhydrase (330 aa).

Residues 1–109 (MSAASAFAMN…AATRIDQITA (109 aa)) are chloroplast transit peptide-like.

Belongs to the beta-class carbonic anhydrase family.

The protein resides in the cytoplasm. It catalyses the reaction hydrogencarbonate + H(+) = CO2 + H2O. Functionally, reversible hydration of carbon dioxide. This chain is Carbonic anhydrase, found in Flaveria bidentis (Coastal plain yellowtops).